We begin with the raw amino-acid sequence, 142 residues long: Putative pre-16S rRNA nuclease (142 aa).

The protein belongs to the YqgF nuclease family.

The protein resides in the cytoplasm. Functionally, could be a nuclease involved in processing of the 5'-end of pre-16S rRNA. This is Putative pre-16S rRNA nuclease from Photobacterium profundum (strain SS9).